We begin with the raw amino-acid sequence, 415 residues long: Serine/threonine transporter SstT (415 aa).

A run of 8 helical transmembrane segments spans residues 15 to 35 (GSLV…AWLA), 45 to 65 (LGTL…WILV), 85 to 105 (ILYI…SFIF), 142 to 162 (ALLN…GIAL), 193 to 213 (VGIF…ALLG), 217 to 237 (LLVV…PLIV), 301 to 321 (GAAV…GIPV), and 331 to 351 (VVSA…LLLI).

It belongs to the dicarboxylate/amino acid:cation symporter (DAACS) (TC 2.A.23) family.

It localises to the cell inner membrane. It catalyses the reaction L-serine(in) + Na(+)(in) = L-serine(out) + Na(+)(out). The enzyme catalyses L-threonine(in) + Na(+)(in) = L-threonine(out) + Na(+)(out). Involved in the import of serine and threonine into the cell, with the concomitant import of sodium (symport system). This Photorhabdus laumondii subsp. laumondii (strain DSM 15139 / CIP 105565 / TT01) (Photorhabdus luminescens subsp. laumondii) protein is Serine/threonine transporter SstT.